The primary structure comprises 173 residues: uncharacterized protein (173 aa).

Helical transmembrane passes span 9-29, 32-52, 100-120, and 127-147; these read FSICICQIFIIYFIFFLLLCV, ICSALSNGFNFLIIYGGTFFH, MFLCFFSSIVFASAFVFSFIV, and FLFLSLNSGFSFTGYITGLYP.

The protein localises to the membrane. This is an uncharacterized protein from Saccharomyces cerevisiae (strain ATCC 204508 / S288c) (Baker's yeast).